Reading from the N-terminus, the 159-residue chain is MKKRKLSKKDWEIIKLLKKDARMSDAEIGRRIGLSKSAVRWRRINLQKRGYLLISAYLRFDKLGYTYAFVLVKIKPDTPRNEILKFKKALMENEHTFEIYEVLGDYNVLIGVFGEDVSELKRNIQELIIGQKCVQEYKVLLGAKSLKGLEVPFWDALED.

Positions 6–66 (LSKKDWEIIK…YLRFDKLGYT (61 aa)) constitute an HTH asnC-type domain. Positions 25-44 (DAEIGRRIGLSKSAVRWRRI) form a DNA-binding region, H-T-H motif.

This is an uncharacterized protein from Pyrococcus horikoshii (strain ATCC 700860 / DSM 12428 / JCM 9974 / NBRC 100139 / OT-3).